Here is a 98-residue protein sequence, read N- to C-terminus: Integration host factor subunit alpha (98 aa).

A disordered region spans residues 49–71 (FGNFDLRDKNQRPGRNPKTGEDI).

The protein belongs to the bacterial histone-like protein family. Heterodimer of an alpha and a beta chain.

Its function is as follows. This protein is one of the two subunits of integration host factor, a specific DNA-binding protein that functions in genetic recombination as well as in transcriptional and translational control. This Shewanella sp. (strain MR-4) protein is Integration host factor subunit alpha.